Reading from the N-terminus, the 170-residue chain is Large ribosomal subunit protein uL10 (170 aa).

Belongs to the universal ribosomal protein uL10 family. Part of the ribosomal stalk of the 50S ribosomal subunit. The N-terminus interacts with L11 and the large rRNA to form the base of the stalk. The C-terminus forms an elongated spine to which L12 dimers bind in a sequential fashion forming a multimeric L10(L12)X complex.

Its function is as follows. Forms part of the ribosomal stalk, playing a central role in the interaction of the ribosome with GTP-bound translation factors. The sequence is that of Large ribosomal subunit protein uL10 from Novosphingobium aromaticivorans (strain ATCC 700278 / DSM 12444 / CCUG 56034 / CIP 105152 / NBRC 16084 / F199).